The sequence spans 206 residues: Ribosomal RNA small subunit methyltransferase G (206 aa).

S-adenosyl-L-methionine is bound by residues G73, L78, V124–E125, and R139.

It belongs to the methyltransferase superfamily. RNA methyltransferase RsmG family.

The protein localises to the cytoplasm. It carries out the reaction guanosine(527) in 16S rRNA + S-adenosyl-L-methionine = N(7)-methylguanosine(527) in 16S rRNA + S-adenosyl-L-homocysteine. Functionally, specifically methylates the N7 position of guanine in position 527 of 16S rRNA. This Pectobacterium atrosepticum (strain SCRI 1043 / ATCC BAA-672) (Erwinia carotovora subsp. atroseptica) protein is Ribosomal RNA small subunit methyltransferase G.